A 216-amino-acid polypeptide reads, in one-letter code: ATP-dependent Clp protease proteolytic subunit (216 aa).

The active-site Nucleophile is serine 103. Residue histidine 128 is part of the active site. The tract at residues 197 to 216 (RRPALPGDDAPRDVSEGPTP) is disordered.

This sequence belongs to the peptidase S14 family. In terms of assembly, fourteen ClpP subunits assemble into 2 heptameric rings which stack back to back to give a disk-like structure with a central cavity, resembling the structure of eukaryotic proteasomes.

It is found in the cytoplasm. It catalyses the reaction Hydrolysis of proteins to small peptides in the presence of ATP and magnesium. alpha-casein is the usual test substrate. In the absence of ATP, only oligopeptides shorter than five residues are hydrolyzed (such as succinyl-Leu-Tyr-|-NHMec, and Leu-Tyr-Leu-|-Tyr-Trp, in which cleavage of the -Tyr-|-Leu- and -Tyr-|-Trp bonds also occurs).. Functionally, cleaves peptides in various proteins in a process that requires ATP hydrolysis. Has a chymotrypsin-like activity. Plays a major role in the degradation of misfolded proteins. The sequence is that of ATP-dependent Clp protease proteolytic subunit from Sphingopyxis alaskensis (strain DSM 13593 / LMG 18877 / RB2256) (Sphingomonas alaskensis).